The primary structure comprises 299 residues: Oxygen-dependent coproporphyrinogen-III oxidase (299 aa).

S92 is a binding site for substrate. A divalent metal cation-binding residues include H96 and H106. H106 (proton donor) is an active-site residue. Residue 108-110 coordinates substrate; that stretch reads NVR. H145 and H175 together coordinate a divalent metal cation. The important for dimerization stretch occupies residues 240–275; that stretch reads YVEFNLVWDRGTLFGLQTGGRTESILMSMPPLVRWE. Residue 258–260 participates in substrate binding; the sequence is GGR.

This sequence belongs to the aerobic coproporphyrinogen-III oxidase family. Homodimer. The cofactor is a divalent metal cation.

It is found in the cytoplasm. It catalyses the reaction coproporphyrinogen III + O2 + 2 H(+) = protoporphyrinogen IX + 2 CO2 + 2 H2O. It participates in porphyrin-containing compound metabolism; protoporphyrin-IX biosynthesis; protoporphyrinogen-IX from coproporphyrinogen-III (O2 route): step 1/1. Involved in the heme biosynthesis. Catalyzes the aerobic oxidative decarboxylation of propionate groups of rings A and B of coproporphyrinogen-III to yield the vinyl groups in protoporphyrinogen-IX. The polypeptide is Oxygen-dependent coproporphyrinogen-III oxidase (Citrobacter koseri (strain ATCC BAA-895 / CDC 4225-83 / SGSC4696)).